The following is an 878-amino-acid chain: Fanconi-associated nuclease 1 homolog (878 aa).

Residues 32–59 (GKTCPLCNIKFSLASYRSHMNVCKVADD) form a UBZ4-type zinc finger. 4 residues coordinate Zn(2+): C35, C38, H50, and C54. The disordered stretch occupies residues 88 to 180 (ENSGQEIPVN…QKSQSESQEA (93 aa)). Positions 142-161 (SEVRSVEKEIKKSPVWENRR) are enriched in basic and acidic residues. Low complexity predominate over residues 168-179 (QNSQKSQSESQE). Mn(2+) is bound by residues E695, D823, E838, and V839. The 114-residue stretch at 757 to 870 (QETIEDNIRR…GIKAEVCHVE (114 aa)) folds into the VRR-NUC domain.

This sequence belongs to the FAN1 family. The cofactor is Mn(2+). Requires Mg(2+) as cofactor.

It localises to the nucleus. The catalysed reaction is Hydrolytically removes 5'-nucleotides successively from the 3'-hydroxy termini of 3'-hydroxy-terminated oligonucleotides.. Nuclease required for the repair of DNA interstrand cross-links (ICL). Acts as a 5'-3' exonuclease that anchors at a cut end of DNA and cleaves DNA successively at every third nucleotide, allowing to excise an ICL from one strand through flanking incisions. This Caenorhabditis briggsae protein is Fanconi-associated nuclease 1 homolog (fan-1).